Consider the following 590-residue polypeptide: Probable indole-3-acetic acid-amido synthetase GH3.1 (590 aa).

The protein belongs to the IAA-amido conjugating enzyme family.

Functionally, catalyzes the synthesis of indole-3-acetic acid (IAA)-amino acid conjugates, providing a mechanism for the plant to cope with the presence of excess auxin. This chain is Probable indole-3-acetic acid-amido synthetase GH3.1 (GH3.1), found in Arabidopsis thaliana (Mouse-ear cress).